The chain runs to 287 residues: PPP2R1A-PPP2R2A-interacting phosphatase regulator 1 (287 aa).

Residues 1-44 (MAQEKMELDLELPPGTGGSPAEGGGSGGGGGLRRSNSAPLIHGL) form a disordered region. Over residues 15 to 32 (GTGGSPAEGGGSGGGGGL) the composition is skewed to gly residues. Ser35 carries the post-translational modification Phosphoserine. Ser37 carries the phosphoserine; by CHEK1 modification. Residue Ser45 is modified to Phosphoserine. Thr47 carries the post-translational modification Phosphothreonine. 3 positions are modified to phosphoserine: Ser48, Ser62, and Ser76. A Glycyl lysine isopeptide (Lys-Gly) (interchain with G-Cter in SUMO1) cross-link involves residue Lys89. Phosphoserine occurs at positions 143 and 147. The residue at position 149 (Thr149) is a Phosphothreonine. Disordered stretches follow at residues 167-189 (SNGL…RSQS) and 236-287 (GVCV…LSSK). 2 stretches are compositionally biased toward low complexity: residues 178 to 189 (PTTRFTTRRSQS) and 246 to 257 (GNSSSAGSSCNS). Phosphoserine occurs at positions 187 and 189. The segment covering 259-270 (AKVSTTTDSPVS) has biased composition (polar residues). Phosphoserine is present on residues Ser267, Ser270, and Ser276.

Belongs to the FAM122 family. In terms of assembly, interacts with PPP2CA and PPP2R1A. Interacts (via its N-terminus) with PPP2R2A; the interaction is direct and this interaction inhibits PP2A activity. The CHEK1-mediated Ser-37 phosphorylated form interacts with 14-3-3 proteins. CHEK1-mediated phosphorylation at Ser-37 negatively regulates its ability to inhibit serine/threonine-protein phosphatase 2A (PP2A) activity. Phosphorylation leads to its release from the PP2A complex and its sequestration by 14-3-3 proteins in the cytoplasm resulting in its inability to translocate to the nucleus, where it otherwise inhibits PP2A.

The protein resides in the nucleus. It is found in the cytoplasm. In terms of biological role, acts as an inhibitor of serine/threonine-protein phosphatase 2A (PP2A) activity. Inhibits PP2A activity by blocking the substrate binding site on PPP2R2A and the active site of PPP2CA. Potentiates ubiquitin-mediated proteasomal degradation of serine/threonine-protein phosphatase 2A catalytic subunit alpha (PPP2CA). Inhibits PP2A-mediated dephosphorylation of WEE1, promoting ubiquitin-mediated proteolysis of WEE1, thereby releasing G2/M checkpoint. The sequence is that of PPP2R1A-PPP2R2A-interacting phosphatase regulator 1 from Homo sapiens (Human).